A 125-amino-acid chain; its full sequence is Small ribosomal subunit protein uS12c (125 aa).

The protein belongs to the universal ribosomal protein uS12 family. In terms of assembly, part of the 30S ribosomal subunit.

The protein resides in the plastid. It localises to the chloroplast. Its function is as follows. With S4 and S5 plays an important role in translational accuracy. Located at the interface of the 30S and 50S subunits. This Nephroselmis olivacea (Green alga) protein is Small ribosomal subunit protein uS12c (rps12).